We begin with the raw amino-acid sequence, 169 residues long: Der GTPase-activating protein YihI (169 aa).

Disordered regions lie at residues 1–98 (MKPS…PQAE) and 144–169 (GLSYDDDEEEEEDEKQEDMMRLLRGN). The segment covering 10-19 (SKGHAKARRK) has biased composition (basic residues). The segment covering 20-30 (TREELDQEARD) has biased composition (basic and acidic residues). Residues 31–40 (RKRLKKRRGH) show a composition bias toward basic residues. The segment covering 49–58 (GNTTSGSKGQ) has biased composition (polar residues). Residues 147–159 (YDDDEEEEEDEKQ) are compositionally biased toward acidic residues. Residues 160 to 169 (EDMMRLLRGN) show a composition bias toward basic and acidic residues.

Belongs to the YihI family. Interacts with Der.

A GTPase-activating protein (GAP) that modifies Der/EngA GTPase function. May play a role in ribosome biogenesis. The chain is Der GTPase-activating protein YihI from Escherichia coli O6:K15:H31 (strain 536 / UPEC).